We begin with the raw amino-acid sequence, 293 residues long: Mimecan (293 aa).

An N-terminal signal peptide occupies residues 1–19; that stretch reads MKTLQATFFLVAFVPLVKP. N-linked (GlcNAc...) asparagine glycosylation occurs at asparagine 60. 7 LRR repeats span residues 107 to 126, 127 to 150, 151 to 174, 175 to 194, 195 to 220, 221 to 241, and 242 to 272; these read EAVPPLPKETAYLYARFNKI, KRIAVSDFADITTLRRIDFSGNMI, EEIEDGAFSKLLLLEELSLAENRL, VKLPVLPPKLTTFNANQNRI, KSRGIKNNAFKKLTNLAYLYLGHNAL, ESVPLNLPESLRILHLQHNNI, and TTITDDTFCKSNNTRYIRTRMDEIRMEGNPI. Residues asparagine 240 and asparagine 253 are each glycosylated (N-linked (GlcNAc...) asparagine). Cysteine 250 and cysteine 283 form a disulfide bridge.

Belongs to the small leucine-rich proteoglycan (SLRP) family. SLRP class III subfamily. Post-translationally, contains keratan sulfate. Expressed in many tissues.

The protein localises to the secreted. It is found in the extracellular space. The protein resides in the extracellular matrix. Its function is as follows. Induces bone formation in conjunction with TGF-beta-1 or TGF-beta-2. The protein is Mimecan (OGN) of Coturnix japonica (Japanese quail).